We begin with the raw amino-acid sequence, 155 residues long: V-type proton ATPase 16 kDa proteolipid subunit c (155 aa).

Topologically, residues 1–10 (MSEAKSGPEY) are lumenal. Residues 11-33 (ASFFAVMGASAAMVFSALGAAYG) form a helical membrane-spanning segment. Topologically, residues 34–55 (TAKSGTGIAAMSVMRPEMIMKS) are cytoplasmic. The helical transmembrane segment at 56–76 (IIPVVMAGIIAIYGLVVAVLI) threads the bilayer. The Lumenal portion of the chain corresponds to 77–92 (ANSLNDGISLYRSFLQ). Residues 93-114 (LGAGLSVGLSGLAAGFAIGIVG) traverse the membrane as a helical segment. Topologically, residues 115 to 131 (DAGVRGTAQQPRLFVGM) are cytoplasmic. The helical transmembrane segment at 132 to 152 (ILILIFAEVLGLYGLIVALIL) threads the bilayer. Residues 153–155 (STK) lie on the Lumenal side of the membrane.

The protein belongs to the V-ATPase proteolipid subunit family. In terms of assembly, V-ATPase is a heteromultimeric enzyme made up of two complexes: the ATP-hydrolytic V1 complex and the proton translocation V0 complex. The V1 complex consists of three catalytic AB heterodimers that form a heterohexamer, three peripheral stalks each consisting of EG heterodimers, one central rotor including subunits D and F, and the regulatory subunits C and H. The proton translocation complex V0 consists of the proton transport subunit a, a ring of proteolipid subunits c9c'', rotary subunit d, subunits e and f, and the accessory subunits ATP6AP1/Ac45 and ATP6AP2/PRR. Interacts with the V0 complex V-ATPase subunit a4 ATP6V0A4. Interacts with LASS2. Interacts with RNF182; this interaction leads to ubiquitination and degradation via the proteasome pathway. Post-translationally, ubiquitinated by RNF182, leading to its degradation via the ubiquitin-proteasome pathway.

Its subcellular location is the cytoplasmic vesicle. The protein resides in the clathrin-coated vesicle membrane. It localises to the secretory vesicle. The protein localises to the synaptic vesicle membrane. Functionally, proton-conducting pore forming subunit of the V0 complex of vacuolar(H+)-ATPase (V-ATPase), a multisubunit enzyme composed of a peripheral complex (V1) that hydrolyzes ATP and a membrane integral complex (V0) that translocates protons. V-ATPase is responsible for acidifying and maintaining the pH of intracellular compartments and in some cell types, is targeted to the plasma membrane, where it is responsible for acidifying the extracellular environment. The chain is V-type proton ATPase 16 kDa proteolipid subunit c (ATP6V0C) from Ovis aries (Sheep).